We begin with the raw amino-acid sequence, 241 residues long: tRNA pseudouridine synthase A (241 aa).

Asp51 functions as the Nucleophile in the catalytic mechanism. Residue Tyr110 coordinates substrate.

It belongs to the tRNA pseudouridine synthase TruA family. In terms of assembly, homodimer.

It carries out the reaction uridine(38/39/40) in tRNA = pseudouridine(38/39/40) in tRNA. Its function is as follows. Formation of pseudouridine at positions 38, 39 and 40 in the anticodon stem and loop of transfer RNAs. In Campylobacter jejuni subsp. jejuni serotype O:2 (strain ATCC 700819 / NCTC 11168), this protein is tRNA pseudouridine synthase A.